The following is a 454-amino-acid chain: Glutamyl-tRNA reductase (454 aa).

Residues 49-52 (TCNR), Ser109, 114-116 (ETQ), and Gln120 each bind substrate. Cys50 acts as the Nucleophile in catalysis. 189–194 (GAGKMG) is an NADP(+) binding site.

The protein belongs to the glutamyl-tRNA reductase family. Homodimer.

It carries out the reaction (S)-4-amino-5-oxopentanoate + tRNA(Glu) + NADP(+) = L-glutamyl-tRNA(Glu) + NADPH + H(+). Its pathway is porphyrin-containing compound metabolism; protoporphyrin-IX biosynthesis; 5-aminolevulinate from L-glutamyl-tRNA(Glu): step 1/2. Its function is as follows. Catalyzes the NADPH-dependent reduction of glutamyl-tRNA(Glu) to glutamate 1-semialdehyde (GSA). The polypeptide is Glutamyl-tRNA reductase (Geobacillus kaustophilus (strain HTA426)).